Consider the following 220-residue polypeptide: Probable GTP-binding protein EngB (220 aa).

One can recognise an EngB-type G domain in the interval 26-200; sequence EGIEIAFAGR…RAKLDEWYAP (175 aa). GTP-binding positions include 34-41, 61-65, 79-82, 146-149, and 179-181; these read GRSNTGKS, GRTQL, DLPG, TKAD, and FSS. Residues serine 41 and threonine 63 each coordinate Mg(2+).

Belongs to the TRAFAC class TrmE-Era-EngA-EngB-Septin-like GTPase superfamily. EngB GTPase family. Mg(2+) serves as cofactor.

Necessary for normal cell division and for the maintenance of normal septation. The protein is Probable GTP-binding protein EngB of Vibrio cholerae serotype O1 (strain ATCC 39541 / Classical Ogawa 395 / O395).